Consider the following 310-residue polypeptide: Homoserine kinase (310 aa).

P91–C101 contributes to the ATP binding site.

This sequence belongs to the GHMP kinase family. Homoserine kinase subfamily.

It localises to the cytoplasm. It carries out the reaction L-homoserine + ATP = O-phospho-L-homoserine + ADP + H(+). Its pathway is amino-acid biosynthesis; L-threonine biosynthesis; L-threonine from L-aspartate: step 4/5. In terms of biological role, catalyzes the ATP-dependent phosphorylation of L-homoserine to L-homoserine phosphate. This chain is Homoserine kinase, found in Escherichia coli (strain SMS-3-5 / SECEC).